Reading from the N-terminus, the 114-residue chain is Prefoldin subunit 6 (114 aa).

Ser2 is subject to N-acetylserine.

It belongs to the prefoldin subunit beta family. As to quaternary structure, heterohexamer of two PFD-alpha type and four PFD-beta type subunits.

It is found in the nucleus. Binds specifically to cytosolic chaperonin (c-CPN) and transfers target proteins to it. Binds to nascent polypeptide chain and promotes folding in an environment in which there are many competing pathways for nonnative proteins. The chain is Prefoldin subunit 6 (YKE2) from Saccharomyces cerevisiae (strain ATCC 204508 / S288c) (Baker's yeast).